A 264-amino-acid polypeptide reads, in one-letter code: Acyl-[acyl-carrier-protein]--UDP-N-acetylglucosamine O-acyltransferase (264 aa).

Belongs to the transferase hexapeptide repeat family. LpxA subfamily. As to quaternary structure, homotrimer.

The protein resides in the cytoplasm. It catalyses the reaction a (3R)-hydroxyacyl-[ACP] + UDP-N-acetyl-alpha-D-glucosamine = a UDP-3-O-[(3R)-3-hydroxyacyl]-N-acetyl-alpha-D-glucosamine + holo-[ACP]. Its pathway is glycolipid biosynthesis; lipid IV(A) biosynthesis; lipid IV(A) from (3R)-3-hydroxytetradecanoyl-[acyl-carrier-protein] and UDP-N-acetyl-alpha-D-glucosamine: step 1/6. Its function is as follows. Involved in the biosynthesis of lipid A, a phosphorylated glycolipid that anchors the lipopolysaccharide to the outer membrane of the cell. The sequence is that of Acyl-[acyl-carrier-protein]--UDP-N-acetylglucosamine O-acyltransferase from Rickettsia canadensis (strain McKiel).